The chain runs to 61 residues: Metallothionein-2 (61 aa).

Methionine 1 is subject to N-acetylmethionine. The interval methionine 1–cysteine 29 is beta. 18 residues coordinate a divalent metal cation: cysteine 5, cysteine 7, cysteine 13, cysteine 15, cysteine 19, cysteine 21, cysteine 24, cysteine 26, cysteine 29, cysteine 33, cysteine 34, cysteine 36, cysteine 37, cysteine 41, cysteine 44, cysteine 48, cysteine 50, and cysteine 57. Residues lysine 30–alanine 61 are alpha. The residue at position 58 (serine 58) is a Phosphoserine. The a divalent metal cation site is built by cysteine 59 and cysteine 60.

It belongs to the metallothionein superfamily. Type 1 family.

In terms of biological role, metallothioneins have a high content of cysteine residues that bind various heavy metals; these proteins are transcriptionally regulated by both heavy metals and glucocorticoids. The polypeptide is Metallothionein-2 (MT2) (Mesocricetus auratus (Golden hamster)).